The sequence spans 377 residues: N5-carboxyaminoimidazole ribonucleotide synthase (377 aa).

ATP contacts are provided by residues arginine 93, lysine 133, 138 to 144, 175 to 178, glutamate 183, histidine 206, and 257 to 258; these read GYDGKGQ, EEFV, and NE. Positions 97–287 constitute an ATP-grasp domain; sequence KALLDNAGVR…QFENHLRAVC (191 aa).

This sequence belongs to the PurK/PurT family. Homodimer.

The catalysed reaction is 5-amino-1-(5-phospho-beta-D-ribosyl)imidazole + hydrogencarbonate + ATP = 5-carboxyamino-1-(5-phospho-D-ribosyl)imidazole + ADP + phosphate + 2 H(+). Its pathway is purine metabolism; IMP biosynthesis via de novo pathway; 5-amino-1-(5-phospho-D-ribosyl)imidazole-4-carboxylate from 5-amino-1-(5-phospho-D-ribosyl)imidazole (N5-CAIR route): step 1/2. Catalyzes the ATP-dependent conversion of 5-aminoimidazole ribonucleotide (AIR) and HCO(3)(-) to N5-carboxyaminoimidazole ribonucleotide (N5-CAIR). The sequence is that of N5-carboxyaminoimidazole ribonucleotide synthase from Vibrio parahaemolyticus serotype O3:K6 (strain RIMD 2210633).